A 1210-amino-acid polypeptide reads, in one-letter code: MRPSGTARTTLLVLLTALCAAGGALEEKKVCQGTSNRLTQLGTFEDHFLSLQRMYNNCEVVLGNLEITYVQRNYDLSFLKTIQEVAGYVLIALNTVERIPLENLQIIRGNALYENTYALAILSNYGTNRTGLRELPMRNLQEILIGAVRFSNNPILCNMDTIQWRDIVQNVFMSNMSMDLQSHPSSCPKCDPSCPNGSCWGGGEENCQKLTKIICAQQCSHRCRGRSPSDCCHNQCAAGCTGPRESDCLVCQKFQDEATCKDTCPPLMLYNPTTYQMDVNPEGKYSFGATCVKKCPRNYVVTDHGSCVRACGPDYYEVEEDGIRKCKKCDGPCRKVCNGIGIGEFKDTLSINATNIKHFKYCTAISGDLHILPVAFKGDSFTRTPPLDPRELEILKTVKEITGFLLIQAWPDNWTDLHAFENLEIIRGRTKQHGQFSLAVVGLNITSLGLRSLKEISDGDVIISGNRNLCYANTINWKKLFGTPNQKTKIMNNRAEKDCKAVNHVCNPLCSSEGCWGPEPRDCVSCQNVSRGRECVEKCNILEGEPREFVENSECIQCHPECLPQAMNITCTGRGPDNCIQCAHYIDGPHCVKTCPAGIMGENNTLVWKYADANNVCHLCHANCTYGCAGPGLQGCEVWPSGPKIPSIATGIVGGLLFIVVVALGIGLFMRRRHIVRKRTLRRLLQERELVEPLTPSGEAPNQAHLRILKETEFKKIKVLGSGAFGTVYKGLWIPEGEKVKIPVAIKELREATSPKANKEILDEAYVMASVDNPHVCRLLGICLTSTVQLITQLMPYGCLLDYVREHKDNIGSQYLLNWCVQIAKGMNYLEDRRLVHRDLAARNVLVKTPQHVKITDFGLAKLLGAEEKEYHAEGGKVPIKWMALESILHRIYTHQSDVWSYGVTVWELMTFGSKPYDGIPASDISSILEKGERLPQPPICTIDVYMIMVKCWMIDADSRPKFRELILEFSKMARDPQRYLVIQGDERMHLPSPTDSNFYRALMDEEDMEDVVDADEYLIPQQGFFNSPSTSRTPLLSSLSATSNNSTVACINRNGSCRVKEDAFLQRYSSDPTGAVTEDNIDDAFLPVPEYVNQSVPKRPAGSVQNPVYHNQPLHPAPGRDLHYQNPHSNAVGNPEYLNTAQPTCLSSGFNSPALWIQKGSHQMSLDNPDYQQDFFPKETKPNGIFKGPTAENAEYLRVAPPSSEFIGA.

The N-terminal stretch at 1-24 (MRPSGTARTTLLVLLTALCAAGGA) is a signal peptide. Over 25-647 (LEEKKVCQGT…VWPSGPKIPS (623 aa)) the chain is Extracellular. Residues C31 and C58 are joined by a disulfide bond. One copy of the Approximate repeat lies at 75 to 300 (DLSFLKTIQE…CVKKCPRNYV (226 aa)). Residues N128, N175, and N196 are each glycosylated (N-linked (GlcNAc...) asparagine). Cystine bridges form between C157–C187, C190–C199, C194–C207, C215–C223, C219–C231, C232–C240, C236–C248, C251–C260, C264–C291, C295–C307, C311–C326, C329–C333, and C337–C362. The residue at position 229 (S229) is a Phosphoserine. 3 N-linked (GlcNAc...) asparagine glycosylation sites follow: N352, N413, and N444. An Approximate repeat occupies 390–600 (RELEILKTVK…CVKTCPAGIM (211 aa)). Intrachain disulfides connect C470-C499, C506-C515, C510-C523, C526-C535, C539-C555, C558-C571, C562-C579, C582-C591, C595-C617, C620-C628, and C624-C636. N528 carries N-linked (GlcNAc...) asparagine glycosylation. A glycan (N-linked (GlcNAc...) asparagine) is linked at N568. N603 and N623 each carry an N-linked (GlcNAc...) asparagine glycan. The chain crosses the membrane as a helical span at residues 648–670 (IATGIVGGLLFIVVVALGIGLFM). The Cytoplasmic segment spans residues 671-1210 (RRRHIVRKRT…APPSSEFIGA (540 aa)). Position 680 is a phosphothreonine; by PKC and PKD/PRKD1 (T680). Positions 690–706 (LVEPLTPSGEAPNQAHL) are important for dimerization, phosphorylation and activation. A Phosphothreonine; by PKD/PRKD1 modification is found at T695. Position 697 is a phosphoserine (S697). The Protein kinase domain maps to 714-981 (FKKIKVLGSG…KMARDPQRYL (268 aa)). K718 participates in a covalent cross-link: Glycyl lysine isopeptide (Lys-Gly) (interchain with G-Cter in ubiquitin). 720–728 (LGSGAFGTV) lines the ATP pocket. K739 participates in a covalent cross-link: Glycyl lysine isopeptide (Lys-Gly) (interchain with G-Cter in ubiquitin). K747 lines the ATP pocket. The residue at position 747 (K747) is an N6-(2-hydroxyisobutyryl)lysine. Glycyl lysine isopeptide (Lys-Gly) (interchain with G-Cter in ubiquitin) cross-links involve residues K756 and K759. 792–793 (TQ) lines the ATP pocket. D839 functions as the Proton acceptor in the catalytic mechanism. ATP is bound at residue D857. K869 participates in a covalent cross-link: Glycyl lysine isopeptide (Lys-Gly) (interchain with G-Cter in ubiquitin). At Y871 the chain carries Phosphotyrosine. Residues K931, K962, and K972 each participate in a glycyl lysine isopeptide (Lys-Gly) (interchain with G-Cter in ubiquitin) cross-link. Residues S993 and S997 each carry the phosphoserine modification. Residues Y1000 and Y1018 each carry the phosphotyrosine; by autocatalysis modification. S1028 and S1041 each carry phosphoserine. T1043 bears the Phosphothreonine mark. The residue at position 1044 (S1044) is a Phosphoserine. C1051 is lipidated: S-palmitoyl cysteine. Y1069 bears the Phosphotyrosine mark. Phosphoserine occurs at positions 1070 and 1071. Residues Y1092 and Y1110 each carry the phosphotyrosine; by autocatalysis modification. Positions 1113-1137 (QPLHPAPGRDLHYQNPHSNAVGNPE) are disordered. Polar residues predominate over residues 1127 to 1137 (NPHSNAVGNPE). C1146 carries S-palmitoyl cysteine lipidation. The residue at position 1166 (S1166) is a Phosphoserine. Y1172 carries the phosphotyrosine; by autocatalysis modification. Y1197 is modified (phosphotyrosine). An Omega-N-methylarginine modification is found at R1199.

Belongs to the protein kinase superfamily. Tyr protein kinase family. EGF receptor subfamily. As to quaternary structure, binding of the ligand triggers homo- and/or heterodimerization of the receptor triggering its autophosphorylation. Heterodimer with ERBB2. Forms a complex with CCDC88A/GIV (via SH2-like region) and GNAI3 which leads to enhanced EGFR signaling and triggering of cell migration; binding of CCDC88A requires autophosphorylation of the EGFR C-terminal region, and ligand stimulation is required for recruitment of GNAI3 to the complex. Interacts with ERRFI1; inhibits dimerization of the kinase domain and autophosphorylation. Part of a complex with ERBB2 and either PIK3C2A or PIK3C2B. Interacts with GRB2; an adapter protein coupling the receptor to downstream signaling pathways. Interacts with GAB2; involved in signaling downstream of EGFR. Interacts with STAT3; mediates EGFR downstream signaling in cell proliferation. Interacts with RIPK1; involved in NF-kappa-B activation. Interacts (autophosphorylated) with CBL, CBLB and CBLC; involved in EGFR ubiquitination and regulation; interaction with CBL is reduced in the presence of tensin TNS4. Interacts with SOCS5; regulates EGFR degradation through ELOC- and ELOB-mediated ubiquitination and proteasomal degradation. Interacts with PRMT5; methylates EGFR and enhances interaction with PTPN6. Interacts (phosphorylated) with PTPN6; inhibits EGFR-dependent activation of MAPK/ERK. Interacts with COPG1; essential for regulation of EGF-dependent nuclear transport of EGFR by retrograde trafficking from the Golgi to the ER. Interacts with TNK2; this interaction is dependent on EGF stimulation and kinase activity of EGFR. Interacts with PCNA; positively regulates PCNA. Interacts with PELP1. Interacts with MUC1. Interacts with AP2M1. Interacts with FER. Interacts (via SH2 domains) with GRB2, NCK1 and NCK2. Interacts with EPS8; mediates EPS8 phosphorylation. Interacts with ATXN2. Interacts with GAREM1. Interacts (ubiquitinated) with ANKRD13A/B/D; the interaction is direct and may regulate EGFR internalization after EGF stimulation. Interacts with GPER1; the interaction occurs in an estrogen-dependent manner. Interacts (via C-terminal cytoplasmic kinase domain) with ZPR1 (via zinc fingers). Interacts with RNF115 and RNF126. Interacts with GPRC5A (via its transmembrane domain). Interacts with FAM83B; positively regulates EGFR inducing its autophosphorylation in absence of stimulation by EGF. Interacts with LAPTM4B; positively correlates with EGFR activation. Interacts with STX19. Interacts with CD44. Interacts with PGRMC1; the interaction requires PGRMC1 homodimerization. Interacts with PIKFYVE. Interacts with NEU3. Interacts with TRAF4. Interacts with the ant venom OMEGA-myrmeciitoxin(02)-Mg1a. Interacts with CD82; this interaction facilitates ligand-induced endocytosis of the receptor and its subsequent desensitization. Monoubiquitinated and polyubiquitinated upon EGF stimulation; which does not affect tyrosine kinase activity or signaling capacity but may play a role in lysosomal targeting. Polyubiquitin linkage is mainly through 'Lys-63', but linkage through 'Lys-48', 'Lys-11' and 'Lys-29' also occurs. Deubiquitinated by OTUD7B, preventing degradation. Ubiquitinated by RNF115 and RNF126. Ubiquitinated by ZNRF1 or CBL at different lysines in response to EGF stimulation; leading to recruitment of the ESCRT machinery and subsequent degradation in the lysosomes. Deubiquitinated by UCHL1 leading to the inhibition of its degradation. In terms of processing, phosphorylated on Tyr residues in response to EGF. Phosphorylation at Ser-697 is partial and occurs only if Thr-695 is phosphorylated. Phosphorylation at Thr-680 and Thr-695 by PRKD1 inhibits EGF-induced MAPK8/JNK1 activation. Dephosphorylation by PTPRJ prevents endocytosis and stabilizes the receptor at the plasma membrane. Autophosphorylation at Tyr-1199 is stimulated by methylation at Arg-1199 and enhances interaction with PTPN6. Autophosphorylation at Tyr-1092 and/or Tyr-1110 recruits STAT3. Dephosphorylated by PTPN1 and PTPN2. Post-translationally, palmitoylated on Cys residues by ZDHHC20. Palmitoylation inhibits internalization after ligand binding, and increases the persistence of tyrosine-phosphorylated EGFR at the cell membrane. Palmitoylation increases the amplitude and duration of EGFR signaling. Methylated. Methylation at Arg-1199 by PRMT5 stimulates phosphorylation at Tyr-1197.

It is found in the cell membrane. Its subcellular location is the endoplasmic reticulum membrane. The protein resides in the golgi apparatus membrane. The protein localises to the nucleus membrane. It localises to the endosome. It is found in the endosome membrane. Its subcellular location is the nucleus. The enzyme catalyses L-tyrosyl-[protein] + ATP = O-phospho-L-tyrosyl-[protein] + ADP + H(+). With respect to regulation, endocytosis and inhibition of the activated EGFR by phosphatases like PTPRJ and PTPRK constitute immediate regulatory mechanisms. Upon EGF-binding phosphorylates EPS15 that regulates EGFR endocytosis and activity. Moreover, inducible feedback inhibitors including LRIG1, SOCS4, SOCS5 and ERRFI1 constitute alternative regulatory mechanisms for the EGFR signaling. Functionally, receptor tyrosine kinase binding ligands of the EGF family and activating several signaling cascades to convert extracellular cues into appropriate cellular responses. Known ligands include EGF, TGFA/TGF-alpha, AREG, epigen/EPGN, BTC/betacellulin, epiregulin/EREG and HBEGF/heparin-binding EGF. Ligand binding triggers receptor homo- and/or heterodimerization and autophosphorylation on key cytoplasmic residues. The phosphorylated receptor recruits adapter proteins like GRB2 which in turn activates complex downstream signaling cascades. Activates at least 4 major downstream signaling cascades including the RAS-RAF-MEK-ERK, PI3 kinase-AKT, PLCgamma-PKC and STATs modules. May also activate the NF-kappa-B signaling cascade. Also directly phosphorylates other proteins like RGS16, activating its GTPase activity and probably coupling the EGF receptor signaling to the G protein-coupled receptor signaling. Also phosphorylates MUC1 and increases its interaction with SRC and CTNNB1/beta-catenin. Positively regulates cell migration via interaction with CCDC88A/GIV which retains EGFR at the cell membrane following ligand stimulation, promoting EGFR signaling which triggers cell migration. Plays a role in enhancing learning and memory performance. Plays a role in mammalian pain signaling (long-lasting hypersensitivity). In Mus musculus (Mouse), this protein is Epidermal growth factor receptor.